We begin with the raw amino-acid sequence, 167 residues long: NADH-quinone oxidoreductase subunit B 1 (167 aa).

Positions 38, 39, 104, and 133 each coordinate [4Fe-4S] cluster.

This sequence belongs to the complex I 20 kDa subunit family. NDH-1 is composed of 14 different subunits. Subunits NuoB, C, D, E, F, and G constitute the peripheral sector of the complex. It depends on [4Fe-4S] cluster as a cofactor.

The protein resides in the cell membrane. It catalyses the reaction a quinone + NADH + 5 H(+)(in) = a quinol + NAD(+) + 4 H(+)(out). Functionally, NDH-1 shuttles electrons from NADH, via FMN and iron-sulfur (Fe-S) centers, to quinones in the respiratory chain. The immediate electron acceptor for the enzyme in this species is believed to be ubiquinone. Couples the redox reaction to proton translocation (for every two electrons transferred, four hydrogen ions are translocated across the cytoplasmic membrane), and thus conserves the redox energy in a proton gradient. This Roseiflexus castenholzii (strain DSM 13941 / HLO8) protein is NADH-quinone oxidoreductase subunit B 1.